A 275-amino-acid chain; its full sequence is Lectin 8 (275 aa).

Positions 1–31 (MANSNPKLLVTQNPFSVFLLTFLLLITNVKS) are cleaved as a signal peptide. Asparagine 55 and asparagine 150 each carry an N-linked (GlcNAc...) asparagine glycan.

The protein belongs to the leguminous lectin family.

Its function is as follows. May be involved in arbuscular mycorrhizal (AM) symbiosis with AM fungi. This Medicago truncatula (Barrel medic) protein is Lectin 8.